Consider the following 92-residue polypeptide: MKILLAIALMLSTVMWVSTQQPQGVHTYCGRHLARTLADLCWEAGVDKRSGAQFASYGSAWLMPYSEGRGKRGIVDECCLRPCSVDVLLSYC.

The first 19 residues, 1–19 (MKILLAIALMLSTVMWVST), serve as a signal peptide directing secretion. Residue glutamine 20 is modified to Pyrrolidone carboxylic acid. Disulfide bonds link cysteine 29/cysteine 79, cysteine 41/cysteine 92, and cysteine 78/cysteine 83. The propeptide at 50–70 (SGAQFASYGSAWLMPYSEGRG) is c peptide like.

Belongs to the insulin family. In terms of assembly, heterodimer of a B chain and an A chain linked by two disulfide bonds.

Its subcellular location is the secreted. Functionally, brain peptide responsible for activation of prothoracic glands to produce ecdysone in insects. This Bombyx mori (Silk moth) protein is Bombyxin A-4 (BBXA4).